The primary structure comprises 223 residues: Deoxyribose-phosphate aldolase (223 aa).

D89 serves as the catalytic Proton donor/acceptor. K152 serves as the catalytic Schiff-base intermediate with acetaldehyde. The active-site Proton donor/acceptor is the K181.

The protein belongs to the DeoC/FbaB aldolase family. DeoC type 1 subfamily.

The protein resides in the cytoplasm. The catalysed reaction is 2-deoxy-D-ribose 5-phosphate = D-glyceraldehyde 3-phosphate + acetaldehyde. It functions in the pathway carbohydrate degradation; 2-deoxy-D-ribose 1-phosphate degradation; D-glyceraldehyde 3-phosphate and acetaldehyde from 2-deoxy-alpha-D-ribose 1-phosphate: step 2/2. Its function is as follows. Catalyzes a reversible aldol reaction between acetaldehyde and D-glyceraldehyde 3-phosphate to generate 2-deoxy-D-ribose 5-phosphate. In Bacillus cereus (strain G9842), this protein is Deoxyribose-phosphate aldolase.